We begin with the raw amino-acid sequence, 164 residues long: Ribosomal RNA large subunit methyltransferase H (164 aa).

G109 contributes to the S-adenosyl-L-methionine binding site.

It belongs to the RNA methyltransferase RlmH family. Homodimer.

The protein localises to the cytoplasm. The catalysed reaction is pseudouridine(1915) in 23S rRNA + S-adenosyl-L-methionine = N(3)-methylpseudouridine(1915) in 23S rRNA + S-adenosyl-L-homocysteine + H(+). In terms of biological role, specifically methylates the pseudouridine at position 1915 (m3Psi1915) in 23S rRNA. The chain is Ribosomal RNA large subunit methyltransferase H from Methylobacterium radiotolerans (strain ATCC 27329 / DSM 1819 / JCM 2831 / NBRC 15690 / NCIMB 10815 / 0-1).